The following is a 382-amino-acid chain: Transcription termination/antitermination protein NusA (382 aa).

The S1 motif domain maps to 135-199; it reads EDIMTGIVQR…KGPQIMISRT (65 aa). The KH domain occupies 301–367; sequence EKTTQVIVPD…TLALDQETAD (67 aa). Residues 348–382 are disordered; that stretch reads LLEDEAASHETLALDQETADQPEATVETSKNHEEE.

Belongs to the NusA family. Monomer. Binds directly to the core enzyme of the DNA-dependent RNA polymerase and to nascent RNA.

It is found in the cytoplasm. Participates in both transcription termination and antitermination. This Halalkalibacterium halodurans (strain ATCC BAA-125 / DSM 18197 / FERM 7344 / JCM 9153 / C-125) (Bacillus halodurans) protein is Transcription termination/antitermination protein NusA.